A 401-amino-acid chain; its full sequence is S-adenosylmethionine synthase (401 aa).

137–142 is a binding site for ATP; it reads GEGSGD. A disordered region spans residues 272–305; the sequence is GTSAEQGDDGSVGRGNRSNGLITPNRSMSMEATS. The segment covering 287–305 has biased composition (polar residues); that stretch reads NRSNGLITPNRSMSMEATS.

This sequence belongs to the AdoMet synthase 2 family. Requires Mg(2+) as cofactor.

The catalysed reaction is L-methionine + ATP + H2O = S-adenosyl-L-methionine + phosphate + diphosphate. It participates in amino-acid biosynthesis; S-adenosyl-L-methionine biosynthesis; S-adenosyl-L-methionine from L-methionine: step 1/1. In terms of biological role, catalyzes the formation of S-adenosylmethionine from methionine and ATP. The chain is S-adenosylmethionine synthase from Natronomonas pharaonis (strain ATCC 35678 / DSM 2160 / CIP 103997 / JCM 8858 / NBRC 14720 / NCIMB 2260 / Gabara) (Halobacterium pharaonis).